A 230-amino-acid chain; its full sequence is 2,3-bisphosphoglycerate-dependent phosphoglycerate mutase (230 aa).

Substrate is bound by residues 8-15 (RHGESEWN), 21-22 (TG), R60, 87-90 (ERHY), K98, 114-115 (RR), and 183-184 (GN). Catalysis depends on H9, which acts as the Tele-phosphohistidine intermediate. Residue E87 is the Proton donor/acceptor of the active site.

This sequence belongs to the phosphoglycerate mutase family. BPG-dependent PGAM subfamily.

It carries out the reaction (2R)-2-phosphoglycerate = (2R)-3-phosphoglycerate. The protein operates within carbohydrate degradation; glycolysis; pyruvate from D-glyceraldehyde 3-phosphate: step 3/5. Functionally, catalyzes the interconversion of 2-phosphoglycerate and 3-phosphoglycerate. The sequence is that of 2,3-bisphosphoglycerate-dependent phosphoglycerate mutase from Streptococcus pneumoniae (strain ATCC BAA-255 / R6).